A 144-amino-acid polypeptide reads, in one-letter code: Small ribosomal subunit protein eS12 (144 aa).

This sequence belongs to the eukaryotic ribosomal protein eS12 family.

This chain is Small ribosomal subunit protein eS12 (RPS12), found in Trypanosoma brucei brucei.